The primary structure comprises 161 residues: 3-isopropylmalate dehydratase small subunit (161 aa).

Belongs to the LeuD family. LeuD type 2 subfamily. As to quaternary structure, heterodimer of LeuC and LeuD.

The catalysed reaction is (2R,3S)-3-isopropylmalate = (2S)-2-isopropylmalate. The protein operates within amino-acid biosynthesis; L-leucine biosynthesis; L-leucine from 3-methyl-2-oxobutanoate: step 2/4. In terms of biological role, catalyzes the isomerization between 2-isopropylmalate and 3-isopropylmalate, via the formation of 2-isopropylmaleate. The chain is 3-isopropylmalate dehydratase small subunit from Clostridium beijerinckii (strain ATCC 51743 / NCIMB 8052) (Clostridium acetobutylicum).